The primary structure comprises 207 residues: Thiamine-phosphate synthase (207 aa).

4-amino-2-methyl-5-(diphosphooxymethyl)pyrimidine-binding positions include 36-40 (QLRMK) and Asn68. 2 residues coordinate Mg(2+): Asp69 and Asp88. Position 106 (Ser106) interacts with 4-amino-2-methyl-5-(diphosphooxymethyl)pyrimidine. 132–134 (TNT) is a binding site for 2-[(2R,5Z)-2-carboxy-4-methylthiazol-5(2H)-ylidene]ethyl phosphate. Lys135 contacts 4-amino-2-methyl-5-(diphosphooxymethyl)pyrimidine. 2-[(2R,5Z)-2-carboxy-4-methylthiazol-5(2H)-ylidene]ethyl phosphate-binding positions include Gly162 and 182 to 183 (VS).

Belongs to the thiamine-phosphate synthase family. The cofactor is Mg(2+).

It carries out the reaction 2-[(2R,5Z)-2-carboxy-4-methylthiazol-5(2H)-ylidene]ethyl phosphate + 4-amino-2-methyl-5-(diphosphooxymethyl)pyrimidine + 2 H(+) = thiamine phosphate + CO2 + diphosphate. The catalysed reaction is 2-(2-carboxy-4-methylthiazol-5-yl)ethyl phosphate + 4-amino-2-methyl-5-(diphosphooxymethyl)pyrimidine + 2 H(+) = thiamine phosphate + CO2 + diphosphate. The enzyme catalyses 4-methyl-5-(2-phosphooxyethyl)-thiazole + 4-amino-2-methyl-5-(diphosphooxymethyl)pyrimidine + H(+) = thiamine phosphate + diphosphate. It functions in the pathway cofactor biosynthesis; thiamine diphosphate biosynthesis; thiamine phosphate from 4-amino-2-methyl-5-diphosphomethylpyrimidine and 4-methyl-5-(2-phosphoethyl)-thiazole: step 1/1. Condenses 4-methyl-5-(beta-hydroxyethyl)thiazole monophosphate (THZ-P) and 2-methyl-4-amino-5-hydroxymethyl pyrimidine pyrophosphate (HMP-PP) to form thiamine monophosphate (TMP). The protein is Thiamine-phosphate synthase of Methanococcus maripaludis (strain DSM 14266 / JCM 13030 / NBRC 101832 / S2 / LL).